The chain runs to 176 residues: Adenine phosphoribosyltransferase (176 aa).

The protein belongs to the purine/pyrimidine phosphoribosyltransferase family. As to quaternary structure, homodimer.

It localises to the cytoplasm. The enzyme catalyses AMP + diphosphate = 5-phospho-alpha-D-ribose 1-diphosphate + adenine. The protein operates within purine metabolism; AMP biosynthesis via salvage pathway; AMP from adenine: step 1/1. Its function is as follows. Catalyzes a salvage reaction resulting in the formation of AMP, that is energically less costly than de novo synthesis. This is Adenine phosphoribosyltransferase from Borrelia garinii subsp. bavariensis (strain ATCC BAA-2496 / DSM 23469 / PBi) (Borreliella bavariensis).